Reading from the N-terminus, the 335-residue chain is tRNA N6-adenosine threonylcarbamoyltransferase (335 aa).

Residues histidine 110 and histidine 114 each contribute to the Fe cation site. Substrate-binding positions include leucine 132–glycine 136, aspartate 165, glycine 178, and asparagine 271. Fe cation is bound at residue aspartate 299.

Belongs to the KAE1 / TsaD family. The cofactor is Fe(2+).

The protein resides in the cytoplasm. The enzyme catalyses L-threonylcarbamoyladenylate + adenosine(37) in tRNA = N(6)-L-threonylcarbamoyladenosine(37) in tRNA + AMP + H(+). Functionally, required for the formation of a threonylcarbamoyl group on adenosine at position 37 (t(6)A37) in tRNAs that read codons beginning with adenine. Is involved in the transfer of the threonylcarbamoyl moiety of threonylcarbamoyl-AMP (TC-AMP) to the N6 group of A37, together with TsaE and TsaB. TsaD likely plays a direct catalytic role in this reaction. The protein is tRNA N6-adenosine threonylcarbamoyltransferase of Campylobacter jejuni subsp. jejuni serotype O:2 (strain ATCC 700819 / NCTC 11168).